Here is a 145-residue protein sequence, read N- to C-terminus: ATP synthase epsilon chain (145 aa).

It belongs to the ATPase epsilon chain family. As to quaternary structure, F-type ATPases have 2 components, CF(1) - the catalytic core - and CF(0) - the membrane proton channel. CF(1) has five subunits: alpha(3), beta(3), gamma(1), delta(1), epsilon(1). CF(0) has three main subunits: a, b and c.

The protein localises to the cell membrane. Produces ATP from ADP in the presence of a proton gradient across the membrane. This Buchnera aphidicola subsp. Baizongia pistaciae (strain Bp) protein is ATP synthase epsilon chain.